The sequence spans 96 residues: NADH-ubiquinone oxidoreductase chain 4L (96 aa).

A run of 3 helical transmembrane segments spans residues 1–21, 27–47, and 61–81; these read MELM…ALSL, MLAL…LVMF, and IILL…VVAI.

Belongs to the complex I subunit 4L family.

The protein resides in the mitochondrion membrane. The catalysed reaction is a ubiquinone + NADH + 5 H(+)(in) = a ubiquinol + NAD(+) + 4 H(+)(out). Its function is as follows. Core subunit of the mitochondrial membrane respiratory chain NADH dehydrogenase (Complex I) which catalyzes electron transfer from NADH through the respiratory chain, using ubiquinone as an electron acceptor. Part of the enzyme membrane arm which is embedded in the lipid bilayer and involved in proton translocation. The sequence is that of NADH-ubiquinone oxidoreductase chain 4L (MT-ND4L) from Lycodon semicarinatus (Ryukyu odd-tooth snake).